Here is a 234-residue protein sequence, read N- to C-terminus: Leucyl/phenylalanyl-tRNA--protein transferase (234 aa).

It belongs to the L/F-transferase family.

Its subcellular location is the cytoplasm. It catalyses the reaction N-terminal L-lysyl-[protein] + L-leucyl-tRNA(Leu) = N-terminal L-leucyl-L-lysyl-[protein] + tRNA(Leu) + H(+). The catalysed reaction is N-terminal L-arginyl-[protein] + L-leucyl-tRNA(Leu) = N-terminal L-leucyl-L-arginyl-[protein] + tRNA(Leu) + H(+). The enzyme catalyses L-phenylalanyl-tRNA(Phe) + an N-terminal L-alpha-aminoacyl-[protein] = an N-terminal L-phenylalanyl-L-alpha-aminoacyl-[protein] + tRNA(Phe). Its function is as follows. Functions in the N-end rule pathway of protein degradation where it conjugates Leu, Phe and, less efficiently, Met from aminoacyl-tRNAs to the N-termini of proteins containing an N-terminal arginine or lysine. The protein is Leucyl/phenylalanyl-tRNA--protein transferase of Salmonella paratyphi A (strain ATCC 9150 / SARB42).